A 714-amino-acid chain; its full sequence is Polyribonucleotide nucleotidyltransferase (714 aa).

Residues D489 and D495 each coordinate Mg(2+). A KH domain is found at 556 to 615 (PKIDTIKIDVDKIKVVIGKGGETIDKIIAETGVKIDIDEEGNVSIYSSDQDAINRAKEII). Positions 625–693 (GEVYHAKVVR…DKGRIDASMK (69 aa)) constitute an S1 motif domain. A disordered region spans residues 691–714 (SMKALVPRPPKPEKSEAKKEGKHD). Residues 700 to 714 (PKPEKSEAKKEGKHD) are compositionally biased toward basic and acidic residues.

Belongs to the polyribonucleotide nucleotidyltransferase family. Requires Mg(2+) as cofactor.

Its subcellular location is the cytoplasm. The catalysed reaction is RNA(n+1) + phosphate = RNA(n) + a ribonucleoside 5'-diphosphate. In terms of biological role, involved in mRNA degradation. Catalyzes the phosphorolysis of single-stranded polyribonucleotides processively in the 3'- to 5'-direction. The chain is Polyribonucleotide nucleotidyltransferase from Streptococcus equi subsp. zooepidemicus (strain H70).